The chain runs to 270 residues: Eukaryotic translation initiation factor 3 subunit G-1 (270 aa).

One can recognise an RRM domain in the interval 189 to 267 (AAIRISNLSE…LILSVEWSKP (79 aa)).

The protein belongs to the eIF-3 subunit G family. As to quaternary structure, component of the eukaryotic translation initiation factor 3 (eIF-3) complex. The eIF-3 complex interacts with pix.

It is found in the cytoplasm. Functionally, RNA-binding component of the eukaryotic translation initiation factor 3 (eIF-3) complex, which is involved in protein synthesis of a specialized repertoire of mRNAs and, together with other initiation factors, stimulates binding of mRNA and methionyl-tRNAi to the 40S ribosome. The eIF-3 complex specifically targets and initiates translation of a subset of mRNAs involved in cell proliferation. This subunit can bind 18S rRNA. This Drosophila ananassae (Fruit fly) protein is Eukaryotic translation initiation factor 3 subunit G-1.